The following is a 309-amino-acid chain: Carbonic anhydrase 4 (309 aa).

Residues 1–17 (MQLLLALLALAYVAPST) form the signal peptide. An Alpha-carbonic anhydrase domain is found at 20–282 (SHWCYEIQAK…LGNRQVFRSH (263 aa)). 2 disulfide bridges follow: cysteine 23/cysteine 35 and cysteine 45/cysteine 226. Catalysis depends on histidine 87, which acts as the Proton donor/acceptor. Zn(2+)-binding residues include histidine 114, histidine 116, and histidine 139. An N-linked (GlcNAc...) asparagine glycan is attached at asparagine 193. Residue 222–223 (TT) participates in substrate binding. Residue serine 281 is the site of GPI-anchor amidated serine attachment. A propeptide spans 282 to 309 (HASGRLLSLPLPTLLVPTLTCLVASFLH) (removed in mature form).

It belongs to the alpha-carbonic anhydrase family. Interacts with SLC4A4. Zn(2+) is required as a cofactor. The N-terminus is blocked. Post-translationally, glycosylated. Present in kidney and lung. Also particularly abundant in brain, muscle, heart and liver. Not detected in skin or spleen.

The protein localises to the cell membrane. The catalysed reaction is hydrogencarbonate + H(+) = CO2 + H2O. With respect to regulation, inhibited by acetazolamide. In terms of biological role, catalyzes the reversible hydration of carbon dioxide into bicarbonate and protons and thus is essential to maintaining intracellular and extracellular pH. May stimulate the sodium/bicarbonate transporter activity of SLC4A4 that acts in pH homeostasis. It is essential for acid overload removal from the retina and retina epithelium, and acid release in the choriocapillaris in the choroid. The protein is Carbonic anhydrase 4 (Ca4) of Rattus norvegicus (Rat).